The following is a 562-amino-acid chain: Long-chain-fatty-acid--CoA ligase (562 aa).

ATP is bound at residue 213-224 (YTGGTTGVAKGA).

It belongs to the ATP-dependent AMP-binding enzyme family. Mg(2+) is required as a cofactor.

The protein resides in the membrane. The enzyme catalyses a long-chain fatty acid + ATP + CoA = a long-chain fatty acyl-CoA + AMP + diphosphate. The protein operates within lipid metabolism; fatty acid beta-oxidation. In terms of biological role, catalyzes the esterification, concomitant with transport, of exogenous long-chain fatty acids into metabolically active CoA thioesters for subsequent degradation or incorporation into phospholipids. This chain is Long-chain-fatty-acid--CoA ligase (fadD), found in Yersinia pestis.